The sequence spans 206 residues: Ribosomal RNA small subunit methyltransferase G (206 aa).

S-adenosyl-L-methionine-binding positions include glycine 73, leucine 78, 124–125 (VE), and arginine 139.

It belongs to the methyltransferase superfamily. RNA methyltransferase RsmG family.

The protein localises to the cytoplasm. The enzyme catalyses guanosine(527) in 16S rRNA + S-adenosyl-L-methionine = N(7)-methylguanosine(527) in 16S rRNA + S-adenosyl-L-homocysteine. In terms of biological role, specifically methylates the N7 position of guanine in position 527 of 16S rRNA. In Pectobacterium carotovorum subsp. carotovorum (strain PC1), this protein is Ribosomal RNA small subunit methyltransferase G.